The primary structure comprises 92 residues: C-C motif chemokine 4 (92 aa).

An N-terminal signal peptide occupies residues 1–23 (MKLCVSALSLLLLVAAFCAPGFS). 2 disulfide bridges follow: Cys34–Cys58 and Cys35–Cys74.

Belongs to the intercrine beta (chemokine CC) family. Homodimer.

It is found in the secreted. Its function is as follows. Monokine with inflammatory and chemokinetic properties. In Mus musculus (Mouse), this protein is C-C motif chemokine 4 (Ccl4).